The following is a 315-amino-acid chain: MDNNGVKPAVSAMEAFEKLEKVGEGTYGKVYRAREKATGMIVALKKTRLHEDEEGVPPTTLREISILRMLARDPHIVRLMDVKQGINKEGKTVLYLVFEYVDTDLKKFIRSFRQAGQNIPQNTVKCLMYQLCKGMAFCHGHGVLHRDLKPHNLLMDRKTMTLKIADLGLARAFTLPMKKYTHEILTLWYRAPEVLLGATHYSTGVDMWSVGCIFAELVTKQAIFAGDSELQQLLRIFRLLGTPNEEVWPGVSKLKDWHEYPQWKPLSLSTAVPNLDEAGLDLLSKMLEYEPAKRISAKKAMEHPYFDDLPDKSSL.

The Protein kinase domain occupies 16-306 (FEKLEKVGEG…AKKAMEHPYF (291 aa)). ATP contacts are provided by residues 22-30 (VGEGTYGKV) and Lys45. Position 27 is a phosphotyrosine (Tyr27). Asp147 functions as the Proton acceptor in the catalytic mechanism. Thr181 is modified (phosphothreonine).

This sequence belongs to the protein kinase superfamily. CMGC Ser/Thr protein kinase family. CDC2/CDKX subfamily. In terms of tissue distribution, expressed in flowers.

It catalyses the reaction L-seryl-[protein] + ATP = O-phospho-L-seryl-[protein] + ADP + H(+). It carries out the reaction L-threonyl-[protein] + ATP = O-phospho-L-threonyl-[protein] + ADP + H(+). The enzyme catalyses [DNA-directed RNA polymerase] + ATP = phospho-[DNA-directed RNA polymerase] + ADP + H(+). This Arabidopsis thaliana (Mouse-ear cress) protein is Cyclin-dependent kinase B2-2 (CDKB2-2).